The primary structure comprises 429 residues: Asparagine--tRNA ligase (429 aa).

Belongs to the class-II aminoacyl-tRNA synthetase family. Homodimer.

Its subcellular location is the cytoplasm. The catalysed reaction is tRNA(Asn) + L-asparagine + ATP = L-asparaginyl-tRNA(Asn) + AMP + diphosphate + H(+). This is Asparagine--tRNA ligase from Desulforamulus reducens (strain ATCC BAA-1160 / DSM 100696 / MI-1) (Desulfotomaculum reducens).